The sequence spans 785 residues: Endonuclease MutS2 (785 aa).

334 to 341 (GPNTGGKT) lines the ATP pocket. The region spanning 710–785 (LDLRGQRYDE…GNGATIVKLK (76 aa)) is the Smr domain.

It belongs to the DNA mismatch repair MutS family. MutS2 subfamily. As to quaternary structure, homodimer. Binds to stalled ribosomes, contacting rRNA.

In terms of biological role, endonuclease that is involved in the suppression of homologous recombination and thus may have a key role in the control of bacterial genetic diversity. Its function is as follows. Acts as a ribosome collision sensor, splitting the ribosome into its 2 subunits. Detects stalled/collided 70S ribosomes which it binds and splits by an ATP-hydrolysis driven conformational change. Acts upstream of the ribosome quality control system (RQC), a ribosome-associated complex that mediates the extraction of incompletely synthesized nascent chains from stalled ribosomes and their subsequent degradation. Probably generates substrates for RQC. This chain is Endonuclease MutS2, found in Lactobacillus helveticus (strain DPC 4571).